Reading from the N-terminus, the 499-residue chain is Cysteine--tRNA ligase (499 aa).

Cys-29 contacts Zn(2+). A 'HIGH' region motif is present at residues 31 to 41; that stretch reads VTVYDLCHLGH. Zn(2+) is bound by residues Cys-213, His-238, and Glu-242. Positions 270 to 274 match the 'KMSKS' region motif; the sequence is KMSKS. Lys-273 lines the ATP pocket.

It belongs to the class-I aminoacyl-tRNA synthetase family. As to quaternary structure, monomer. Zn(2+) is required as a cofactor.

It is found in the cytoplasm. The enzyme catalyses tRNA(Cys) + L-cysteine + ATP = L-cysteinyl-tRNA(Cys) + AMP + diphosphate. This is Cysteine--tRNA ligase from Synechococcus sp. (strain CC9902).